The following is a 282-amino-acid chain: NADPH-dependent 7-cyano-7-deazaguanine reductase (282 aa).

Residue 88–90 (IES) participates in substrate binding. 90–91 (SK) is a binding site for NADPH. The active-site Thioimide intermediate is the cysteine 190. Aspartate 197 serves as the catalytic Proton donor. Residue 229-230 (HE) participates in substrate binding. 258 to 259 (RG) serves as a coordination point for NADPH.

This sequence belongs to the GTP cyclohydrolase I family. QueF type 2 subfamily. As to quaternary structure, homodimer.

Its subcellular location is the cytoplasm. The enzyme catalyses 7-aminomethyl-7-carbaguanine + 2 NADP(+) = 7-cyano-7-deazaguanine + 2 NADPH + 3 H(+). The protein operates within tRNA modification; tRNA-queuosine biosynthesis. Functionally, catalyzes the NADPH-dependent reduction of 7-cyano-7-deazaguanine (preQ0) to 7-aminomethyl-7-deazaguanine (preQ1). This is NADPH-dependent 7-cyano-7-deazaguanine reductase from Escherichia coli (strain SMS-3-5 / SECEC).